A 254-amino-acid chain; its full sequence is Phosphoribosylaminoimidazole-succinocarboxamide synthase (254 aa).

Belongs to the SAICAR synthetase family.

It carries out the reaction 5-amino-1-(5-phospho-D-ribosyl)imidazole-4-carboxylate + L-aspartate + ATP = (2S)-2-[5-amino-1-(5-phospho-beta-D-ribosyl)imidazole-4-carboxamido]succinate + ADP + phosphate + 2 H(+). It participates in purine metabolism; IMP biosynthesis via de novo pathway; 5-amino-1-(5-phospho-D-ribosyl)imidazole-4-carboxamide from 5-amino-1-(5-phospho-D-ribosyl)imidazole-4-carboxylate: step 1/2. The sequence is that of Phosphoribosylaminoimidazole-succinocarboxamide synthase from Bartonella tribocorum (strain CIP 105476 / IBS 506).